Consider the following 481-residue polypeptide: Xylulose kinase (481 aa).

81–82 (QH) is a substrate binding site. Residue D239 is the Proton acceptor of the active site.

This sequence belongs to the FGGY kinase family.

The catalysed reaction is D-xylulose + ATP = D-xylulose 5-phosphate + ADP + H(+). In terms of biological role, catalyzes the phosphorylation of D-xylulose to D-xylulose 5-phosphate. This Streptomyces rubiginosus protein is Xylulose kinase.